We begin with the raw amino-acid sequence, 280 residues long: Phosphatidylglycerol--prolipoprotein diacylglyceryl transferase (280 aa).

A run of 4 helical transmembrane segments spans residues 30 to 50 (WYGL…RRIV), 71 to 91 (FLLW…ILFY), 106 to 126 (IWNG…AMII), and 132 to 152 (AIPI…GLFF). Arginine 154 serves as a coordination point for a 1,2-diacyl-sn-glycero-3-phospho-(1'-sn-glycerol). 3 helical membrane-spanning segments follow: residues 188 to 208 (QLYE…WFVY), 217 to 237 (GLVT…VEFF), and 251 to 271 (WLTM…WAIA).

It belongs to the Lgt family.

Its subcellular location is the cell inner membrane. The catalysed reaction is L-cysteinyl-[prolipoprotein] + a 1,2-diacyl-sn-glycero-3-phospho-(1'-sn-glycerol) = an S-1,2-diacyl-sn-glyceryl-L-cysteinyl-[prolipoprotein] + sn-glycerol 1-phosphate + H(+). Its pathway is protein modification; lipoprotein biosynthesis (diacylglyceryl transfer). Its function is as follows. Catalyzes the transfer of the diacylglyceryl group from phosphatidylglycerol to the sulfhydryl group of the N-terminal cysteine of a prolipoprotein, the first step in the formation of mature lipoproteins. The polypeptide is Phosphatidylglycerol--prolipoprotein diacylglyceryl transferase (Sinorhizobium medicae (strain WSM419) (Ensifer medicae)).